Here is a 307-residue protein sequence, read N- to C-terminus: Pseudouridine-5'-phosphate glycosidase (307 aa).

Residue Glu25 is the Proton donor of the active site. Residues Lys86 and Val106 each contribute to the substrate site. A Mn(2+)-binding site is contributed by Asp138. Residue 140-142 (SAD) coordinates substrate. Lys159 functions as the Nucleophile in the catalytic mechanism.

It belongs to the pseudouridine-5'-phosphate glycosidase family. Homotrimer. Mn(2+) is required as a cofactor.

It catalyses the reaction D-ribose 5-phosphate + uracil = psi-UMP + H2O. Its function is as follows. Catalyzes the reversible cleavage of pseudouridine 5'-phosphate (PsiMP) to ribose 5-phosphate and uracil. Functions biologically in the cleavage direction, as part of a pseudouridine degradation pathway. This chain is Pseudouridine-5'-phosphate glycosidase, found in Caldanaerobacter subterraneus subsp. tengcongensis (strain DSM 15242 / JCM 11007 / NBRC 100824 / MB4) (Thermoanaerobacter tengcongensis).